Reading from the N-terminus, the 623-residue chain is Kelch repeat and BTB domain-containing protein 12 (623 aa).

The BTB domain maps to 31–98 (IDVVLTAEGE…MYNAALEINN (68 aa)). In terms of domain architecture, BACK spans 133-235 (CLGIYYFAKQ…NPSFLRQALR (103 aa)). Kelch repeat units lie at residues 386 to 436 (DLYV…TVNN), 437 to 492 (KLYV…VVNS), 494 to 547 (IYVL…STNA), and 553 to 603 (KLYV…LVAR).

In Homo sapiens (Human), this protein is Kelch repeat and BTB domain-containing protein 12 (KBTBD12).